The sequence spans 151 residues: 3-hydroxyacyl-[acyl-carrier-protein] dehydratase FabZ (151 aa).

The active site involves His-56.

It belongs to the thioester dehydratase family. FabZ subfamily.

It is found in the cytoplasm. It catalyses the reaction a (3R)-hydroxyacyl-[ACP] = a (2E)-enoyl-[ACP] + H2O. Its function is as follows. Involved in unsaturated fatty acids biosynthesis. Catalyzes the dehydration of short chain beta-hydroxyacyl-ACPs and long chain saturated and unsaturated beta-hydroxyacyl-ACPs. This Nitrobacter winogradskyi (strain ATCC 25391 / DSM 10237 / CIP 104748 / NCIMB 11846 / Nb-255) protein is 3-hydroxyacyl-[acyl-carrier-protein] dehydratase FabZ.